We begin with the raw amino-acid sequence, 261 residues long: Flap endonuclease Xni (261 aa).

Asp105 provides a ligand contact to Mg(2+). A 5'-3' exonuclease domain is found at 164-256 (SQFLDLMALA…DFRVNSPTKA (93 aa)). Positions 172, 173, 181, 183, and 186 each coordinate K(+). Residues 185-190 (GIGPKS) form an interaction with DNA region.

Belongs to the Xni family. Requires Mg(2+) as cofactor. The cofactor is K(+).

Functionally, has flap endonuclease activity. During DNA replication, flap endonucleases cleave the 5'-overhanging flap structure that is generated by displacement synthesis when DNA polymerase encounters the 5'-end of a downstream Okazaki fragment. The polypeptide is Flap endonuclease Xni (Shewanella oneidensis (strain ATCC 700550 / JCM 31522 / CIP 106686 / LMG 19005 / NCIMB 14063 / MR-1)).